The primary structure comprises 219 residues: U-scoloptoxin(11)-Sm7a (219 aa).

A signal peptide spans 1-15; sequence MYLFLMINYFVLANS.

This sequence belongs to the scoloptoxin-11 family. Post-translationally, contains 8 disulfide bonds. As to expression, expressed by the venom gland.

It localises to the secreted. The chain is U-scoloptoxin(11)-Sm7a from Scolopendra morsitans (Tanzanian blue ringleg centipede).